Here is a 190-residue protein sequence, read N- to C-terminus: Elongation factor P-like protein (190 aa).

It belongs to the elongation factor P family.

This Klebsiella pneumoniae subsp. pneumoniae (strain ATCC 700721 / MGH 78578) protein is Elongation factor P-like protein.